Consider the following 269-residue polypeptide: GTP cyclohydrolase FolE2 2 (269 aa).

This sequence belongs to the GTP cyclohydrolase IV family.

It catalyses the reaction GTP + H2O = 7,8-dihydroneopterin 3'-triphosphate + formate + H(+). It functions in the pathway cofactor biosynthesis; 7,8-dihydroneopterin triphosphate biosynthesis; 7,8-dihydroneopterin triphosphate from GTP: step 1/1. Converts GTP to 7,8-dihydroneopterin triphosphate. The chain is GTP cyclohydrolase FolE2 2 from Burkholderia lata (strain ATCC 17760 / DSM 23089 / LMG 22485 / NCIMB 9086 / R18194 / 383).